A 77-amino-acid chain; its full sequence is Conotoxin CaHr91 (77 aa).

The first 19 residues, 1-19 (MKLTCALIITVLFLSITAD), serve as a signal peptide directing secretion. The propeptide occupies 20–43 (DSRGKQGYRALKSIAGMLNSKTVR). Disulfide bonds link C45–C60, C52–C65, and C59–C74.

Belongs to the conotoxin O1 superfamily. Expressed by the venom duct.

It localises to the secreted. The polypeptide is Conotoxin CaHr91 (Conus capitaneus (Captain cone)).